The primary structure comprises 755 residues: Serine/threonine-protein kinase GA29083 (755 aa).

The span at 18 to 52 (QASASGSGTPKKTAASSAAAQNSKQLLDQLSQQQK) shows a compositional bias: low complexity. The tract at residues 18–128 (QASASGSGTP…GSANTNGSAS (111 aa)) is disordered. Basic and acidic residues-rich tracts occupy residues 53 to 66 (AQEE…RDCD) and 74 to 84 (EPEKDLDELRD). The span at 87–99 (GSLTGSGSVGKSN) shows a compositional bias: polar residues. Residues 100-128 (GSLSGASSTTSAPAGTSTPGSANTNGSAS) show a composition bias toward low complexity. 2 consecutive Doublecortin domains span residues 157-243 (HRIK…VDYN) and 314-397 (RIVT…VEDF). The Protein kinase domain maps to 484–742 (YTLSQIIGDG…SEDILDHYWT (259 aa)). ATP contacts are provided by residues 490–498 (IGDGNFAIV) and Lys-513. Asp-605 (proton acceptor) is an active-site residue.

It belongs to the protein kinase superfamily. CAMK Ser/Thr protein kinase family. CaMK subfamily.

The enzyme catalyses L-seryl-[protein] + ATP = O-phospho-L-seryl-[protein] + ADP + H(+). It catalyses the reaction L-threonyl-[protein] + ATP = O-phospho-L-threonyl-[protein] + ADP + H(+). The protein is Serine/threonine-protein kinase GA29083 of Drosophila pseudoobscura pseudoobscura (Fruit fly).